The chain runs to 316 residues: Secondary metabolism regulator laeA (316 aa).

This sequence belongs to the methyltransferase superfamily. LaeA methyltransferase family. Component of the heterotrimeric velvet complex composed of laeA, veA and velB; VeA acting as a bridging protein between laeA and velB.

Its subcellular location is the nucleus. The enzyme catalyses L-methionyl-[protein] + S-adenosyl-L-methionine = S-methyl-L-methionyl-[protein] + S-adenosyl-L-homocysteine. Functionally, methyltransferase that performs automethylation. No other methyl-accepting substrate has been identified yet. Component of the velvet transcription factor complex that acts as a global regulator for secondary metabolite gene expression. Controls the biosynthetic gene cluster for beauvericin, a depsipeptide mycotoxin that functions as a virulence determinant. The velvet complex also regulates chromatin structure and transcription of siderophore biosynthetic genes and is required for infection of tomato plants. The velvet complex also governs expression of nitrate metabolism genes. The sequence is that of Secondary metabolism regulator laeA from Fusarium oxysporum f. sp. lycopersici (strain 4287 / CBS 123668 / FGSC 9935 / NRRL 34936) (Fusarium vascular wilt of tomato).